The chain runs to 348 residues: tRNA N6-adenosine threonylcarbamoyltransferase (348 aa).

2 residues coordinate Fe cation: H115 and H119. Substrate is bound by residues 138–142, D171, G184, and N276; that span reads LVSGG. Position 304 (D304) interacts with Fe cation.

Belongs to the KAE1 / TsaD family. The cofactor is Fe(2+).

It is found in the cytoplasm. It carries out the reaction L-threonylcarbamoyladenylate + adenosine(37) in tRNA = N(6)-L-threonylcarbamoyladenosine(37) in tRNA + AMP + H(+). Its function is as follows. Required for the formation of a threonylcarbamoyl group on adenosine at position 37 (t(6)A37) in tRNAs that read codons beginning with adenine. Is involved in the transfer of the threonylcarbamoyl moiety of threonylcarbamoyl-AMP (TC-AMP) to the N6 group of A37, together with TsaE and TsaB. TsaD likely plays a direct catalytic role in this reaction. In Xylella fastidiosa (strain 9a5c), this protein is tRNA N6-adenosine threonylcarbamoyltransferase.